The chain runs to 95 residues: Aspartyl/glutamyl-tRNA(Asn/Gln) amidotransferase subunit C (95 aa).

It belongs to the GatC family. As to quaternary structure, heterotrimer of A, B and C subunits.

The enzyme catalyses L-glutamyl-tRNA(Gln) + L-glutamine + ATP + H2O = L-glutaminyl-tRNA(Gln) + L-glutamate + ADP + phosphate + H(+). It carries out the reaction L-aspartyl-tRNA(Asn) + L-glutamine + ATP + H2O = L-asparaginyl-tRNA(Asn) + L-glutamate + ADP + phosphate + 2 H(+). Allows the formation of correctly charged Asn-tRNA(Asn) or Gln-tRNA(Gln) through the transamidation of misacylated Asp-tRNA(Asn) or Glu-tRNA(Gln) in organisms which lack either or both of asparaginyl-tRNA or glutaminyl-tRNA synthetases. The reaction takes place in the presence of glutamine and ATP through an activated phospho-Asp-tRNA(Asn) or phospho-Glu-tRNA(Gln). The chain is Aspartyl/glutamyl-tRNA(Asn/Gln) amidotransferase subunit C from Pelobacter propionicus (strain DSM 2379 / NBRC 103807 / OttBd1).